The chain runs to 72 residues: Guanine nucleotide-binding protein subunit gamma (72 aa).

Residues 32–72 form a disordered region; it reads MVSVAPPKANPSVSSKTKQQQHFKPGKATKDKATTKCCTIS. C68 carries the S-palmitoyl cysteine lipid modification. At C69 the chain carries Cysteine methyl ester. C69 carries the S-farnesyl cysteine lipid modification. The propeptide at 70 to 72 is removed in mature form; the sequence is TIS.

Belongs to the G protein gamma family. As to quaternary structure, g proteins are composed of 3 units, alpha, beta and gamma. Binding of the beta-gamma subunit complex (git5-git11) to the alpha subunit (gpa2) facilitates interaction with GPCR git3.

It is found in the cell membrane. Functionally, gamma subunit of the heterotrimeric guanine nucleotide-binding protein (G protein) involved in glucose-induced cAMP signaling. The beta-gamma subunits (git5-git11) promote binding of the alpha subunit gpa2 to GPCR git3, which senses extracellular glucose, to activate cAMP-PKA signaling and repress sexual development and gluconeogenesis. The protein is Guanine nucleotide-binding protein subunit gamma (git11) of Schizosaccharomyces pombe (strain 972 / ATCC 24843) (Fission yeast).